Consider the following 167-residue polypeptide: Phospholipase A2 (167 aa).

Residues tryptophan 38, glycine 40, and glycine 42 each contribute to the Ca(2+) site. Intrachain disulfides connect cysteine 39–cysteine 61, cysteine 60–cysteine 99, cysteine 67–cysteine 92, cysteine 90–cysteine 127, and cysteine 132–cysteine 144. A glycan (N-linked (GlcNAc...) asparagine) is linked at asparagine 47. Histidine 64 is a catalytic residue. Residue aspartate 65 coordinates Ca(2+). A propeptide spanning residues 136 to 140 (ARSAR) is cleaved from the precursor.

Belongs to the phospholipase A2 family. Group III subfamily. In terms of assembly, heterodimer composed of a large subunit and a small subunit; disulfide-linked. Ca(2+) is required as a cofactor. Expressed by the venom gland.

The protein localises to the secreted. It carries out the reaction a 1,2-diacyl-sn-glycero-3-phosphocholine + H2O = a 1-acyl-sn-glycero-3-phosphocholine + a fatty acid + H(+). Functionally, phospholipase toxin, which catalyzes the calcium-dependent hydrolysis of the 2-acyl groups in 3-sn-phosphoglycerides. Inhibits both skeletal (RYR1) and cardiac (RYR2) ryanodine receptors (calcium release channels). Probably blocks ryanodine receptors by generating a lipid product. Shows hemolytic activity, but it is not know if it is direct or indirect. This chain is Phospholipase A2, found in Hottentotta tamulus (Eastern Indian scorpion).